A 399-amino-acid chain; its full sequence is Tryptophan synthase beta chain (399 aa).

An N6-(pyridoxal phosphate)lysine modification is found at K92.

This sequence belongs to the TrpB family. As to quaternary structure, tetramer of two alpha and two beta chains. Pyridoxal 5'-phosphate is required as a cofactor.

The catalysed reaction is (1S,2R)-1-C-(indol-3-yl)glycerol 3-phosphate + L-serine = D-glyceraldehyde 3-phosphate + L-tryptophan + H2O. It participates in amino-acid biosynthesis; L-tryptophan biosynthesis; L-tryptophan from chorismate: step 5/5. Its function is as follows. The beta subunit is responsible for the synthesis of L-tryptophan from indole and L-serine. This Oceanobacillus iheyensis (strain DSM 14371 / CIP 107618 / JCM 11309 / KCTC 3954 / HTE831) protein is Tryptophan synthase beta chain.